A 153-amino-acid chain; its full sequence is Small ribosomal subunit protein uS13 (153 aa).

The segment at 134–153 is disordered; sequence GQRTKSNGRRGRSMGVSRKK.

This sequence belongs to the universal ribosomal protein uS13 family.

The protein localises to the cytoplasm. In terms of biological role, located at the top of the head of the 40S subunit, it contacts several helices of the 18S rRNA. This Encephalitozoon cuniculi (strain GB-M1) (Microsporidian parasite) protein is Small ribosomal subunit protein uS13 (RPS18).